A 127-amino-acid chain; its full sequence is Large ribosomal subunit protein bL12 (127 aa).

It belongs to the bacterial ribosomal protein bL12 family. Homodimer. Part of the ribosomal stalk of the 50S ribosomal subunit. Forms a multimeric L10(L12)X complex, where L10 forms an elongated spine to which 2 to 4 L12 dimers bind in a sequential fashion. Binds GTP-bound translation factors.

Its function is as follows. Forms part of the ribosomal stalk which helps the ribosome interact with GTP-bound translation factors. Is thus essential for accurate translation. The polypeptide is Large ribosomal subunit protein bL12 (Streptococcus thermophilus (strain CNRZ 1066)).